Consider the following 244-residue polypeptide: tRNA pseudouridine synthase A (244 aa).

Asp-52 serves as the catalytic Nucleophile. A substrate-binding site is contributed by Tyr-110.

Belongs to the tRNA pseudouridine synthase TruA family. In terms of assembly, homodimer.

The enzyme catalyses uridine(38/39/40) in tRNA = pseudouridine(38/39/40) in tRNA. Formation of pseudouridine at positions 38, 39 and 40 in the anticodon stem and loop of transfer RNAs. The sequence is that of tRNA pseudouridine synthase A from Clostridium acetobutylicum (strain ATCC 824 / DSM 792 / JCM 1419 / IAM 19013 / LMG 5710 / NBRC 13948 / NRRL B-527 / VKM B-1787 / 2291 / W).